The sequence spans 567 residues: Urease subunit alpha (567 aa).

Residues 129–567 (GGIDAHIHFI…LPLAQRYFLF (439 aa)) form the Urease domain. Ni(2+)-binding residues include His-134, His-136, and Lys-217. At Lys-217 the chain carries N6-carboxylysine. His-219 provides a ligand contact to substrate. Ni(2+) is bound by residues His-246 and His-272. The active-site Proton donor is the His-320. Asp-360 provides a ligand contact to Ni(2+).

The protein belongs to the metallo-dependent hydrolases superfamily. Urease alpha subunit family. As to quaternary structure, heterotrimer of UreA (gamma), UreB (beta) and UreC (alpha) subunits. Three heterotrimers associate to form the active enzyme. Ni cation serves as cofactor. Carboxylation allows a single lysine to coordinate two nickel ions.

It localises to the cytoplasm. The enzyme catalyses urea + 2 H2O + H(+) = hydrogencarbonate + 2 NH4(+). It functions in the pathway nitrogen metabolism; urea degradation; CO(2) and NH(3) from urea (urease route): step 1/1. This is Urease subunit alpha from Hahella chejuensis (strain KCTC 2396).